The primary structure comprises 467 residues: Involucrin (467 aa).

The tract at residues 48–467 (EIQEKGFPKH…ELENRTQQEK (420 aa)) is disordered. Basic and acidic residues predominate over residues 49-75 (IQEKGFPKHEEKRPNPVKDLPDQKCEH). Composition is skewed to low complexity over residues 76–95 (QQQP…QQEL) and 105–177 (QQLP…VPQE). 2 stretches are compositionally biased toward basic and acidic residues: residues 178-192 (LHLR…DPEL) and 220-231 (RHQEPQEQELHL). The span at 278–290 (QQQQESPEPELQL) shows a compositional bias: low complexity. 5 stretches are compositionally biased toward basic and acidic residues: residues 295–318 (QSHE…ELYL), 348–373 (LEEK…HEPD), 380–391 (EKQKLGEPELHL), 415–437 (KQEK…KELS), and 450–467 (KQLE…QQEK).

The protein belongs to the involucrin family. In terms of assembly, directly or indirectly cross-linked to cornifelin (CNFN). Substrate of transglutaminase. Specific glutamines or lysines are cross-linked to keratins, desmoplakin and to inter involucrin molecules. Keratinocytes of epidermis and other stratified squamous epithelia.

It localises to the cytoplasm. Its function is as follows. Part of the insoluble cornified cell envelope (CE) of stratified squamous epithelia. This Mus musculus (Mouse) protein is Involucrin (Ivl).